The primary structure comprises 745 residues: Interleukin-17 receptor D (745 aa).

The first 26 residues, 1-26, serve as a signal peptide directing secretion; that stretch reads MAGSRRLAHFFMASCLFLCYTASVNG. Residues 27-298 are Extracellular-facing; that stretch reads GKRGNSDKCS…VHSPWAGPIR (272 aa). N-linked (GlcNAc...) asparagine glycosylation is found at N61, N79, N136, N170, N205, and N276. A helical membrane pass occupies residues 299-319; it reads AMAITVPLVIMSAFATLFTVM. Topologically, residues 320–745 are cytoplasmic; the sequence is CRKKQQENIY…SEGLIAAAST (426 aa). In terms of domain architecture, SEFIR spans 354 to 518; sequence RPKIFICYSS…LMDQLPQLFA (165 aa). Disordered regions lie at residues 432–454 and 631–713; these read RHRK…DSSS and REDL…PPAV. A compositionally biased stretch (basic and acidic residues) spans 439 to 448; sequence TSKEKNREPS. Low complexity predominate over residues 693–705; that stretch reads SSLADSVSSSSGL.

As to quaternary structure, interacts with fgfr1 and fgfr2.

The protein resides in the membrane. In terms of biological role, feedback inhibitor of fibroblast growth factor mediated Ras-MAPK signaling and ERK activation. May inhibit FGF-induced FGFR1 tyrosine phosphorylation. This chain is Interleukin-17 receptor D (il17rd), found in Danio rerio (Zebrafish).